The chain runs to 131 residues: D-ribose pyranase (131 aa).

His-20 serves as the catalytic Proton donor. Substrate contacts are provided by residues Asp-28, His-98, and 120–122; that span reads YSN.

This sequence belongs to the RbsD / FucU family. RbsD subfamily. As to quaternary structure, homodecamer.

The protein localises to the cytoplasm. It carries out the reaction beta-D-ribopyranose = beta-D-ribofuranose. It participates in carbohydrate metabolism; D-ribose degradation; D-ribose 5-phosphate from beta-D-ribopyranose: step 1/2. In terms of biological role, catalyzes the interconversion of beta-pyran and beta-furan forms of D-ribose. This Limosilactobacillus reuteri (strain DSM 20016) (Lactobacillus reuteri) protein is D-ribose pyranase.